Consider the following 79-residue polypeptide: MNEIISNHTLDALGLRCPEPVMMVRKQIRHMQDGEVLLIIADDPATTRDIPSFCQFMDHTLLNSETESLPFKYWVKKGL.

Residue cysteine 17 is the Cysteine persulfide intermediate of the active site.

This sequence belongs to the sulfur carrier protein TusA family.

The protein resides in the cytoplasm. Its function is as follows. Sulfur carrier protein which probably makes part of a sulfur-relay system. This is Sulfur carrier protein TusA from Mannheimia succiniciproducens (strain KCTC 0769BP / MBEL55E).